We begin with the raw amino-acid sequence, 605 residues long: Apoptosis-inducing factor 3 (605 aa).

Positions K22 to T45 are disordered. The Rieske domain maps to A70 to V165. [2Fe-2S] cluster is bound by residues C109, H111, C128, and H131. FAD-binding positions include G201 to A205, R235, K240, V270, D467, and W514.

The protein belongs to the FAD-dependent oxidoreductase family. As to expression, ubiquitous. Expressed in bone marrow, cerebral cortex, liver, ovary, thymus, thyroid gland and tongue (at protein level).

The protein resides in the mitochondrion. Induces apoptosis through a caspase dependent pathway. Reduces mitochondrial membrane potential. This is Apoptosis-inducing factor 3 (AIFM3) from Homo sapiens (Human).